Consider the following 160-residue polypeptide: Major pollen allergen Car b 1 isoforms 1A and 1B (160 aa).

Belongs to the BetVI family.

The polypeptide is Major pollen allergen Car b 1 isoforms 1A and 1B (Carpinus betulus (European hornbeam)).